Consider the following 274-residue polypeptide: MKKTAIALLAWFVSSASLAATPWQKITHPVPGAAQSIGSFANGCIIGADTLPVQSDNYQVMRTDQRRYFGHPDLVMFIQRLSHQAQQRGLGTVLIGDMGMPAGGRFNGGHASHQTGLDVDIFLQLPKTRWSQAQLLRPQALDLVSRDGKHVVPSRWSSDIASLIKLAAQDNDVTRIFVNPAIKQQLCLDAGNDRDWLRKVRPWFQHRAHMHVRLRCPADSLECEDQPLPPPGDGCGAELQSWFEPPKLGTTKPEKKTPPPLPPSCQALLDEHVL.

The signal sequence occupies residues 1–19; the sequence is MKKTAIALLAWFVSSASLA. Disulfide bonds link Cys-44–Cys-265, Cys-187–Cys-235, and Cys-216–Cys-223. Zn(2+)-binding residues include His-110, His-113, Asp-120, Asp-147, His-150, and His-211. The interval 225-274 is disordered; that stretch reads DQPLPPPGDGCGAELQSWFEPPKLGTTKPEKKTPPPLPPSCQALLDEHVL.

The protein belongs to the peptidase M74 family. As to quaternary structure, dimer. Zn(2+) is required as a cofactor.

The protein localises to the periplasm. In terms of biological role, murein endopeptidase that cleaves the D-alanyl-meso-2,6-diamino-pimelyl amide bond that connects peptidoglycan strands. Likely plays a role in the removal of murein from the sacculus. The polypeptide is Penicillin-insensitive murein endopeptidase (Salmonella paratyphi B (strain ATCC BAA-1250 / SPB7)).